An 830-amino-acid polypeptide reads, in one-letter code: Phenylalanine--tRNA ligase beta subunit (830 aa).

The 120-residue stretch at 39–158 (GQSLDGVVVG…DDTPVGTPFP (120 aa)) folds into the tRNA-binding domain. In terms of domain architecture, B5 spans 417–492 (PAEKTIALRP…RLHGYDQIPE (76 aa)). The Mg(2+) site is built by D470, D476, E479, and E480. Residues 490-510 (IPEPERVPVPSRTPEQPPEET) are disordered. In terms of domain architecture, FDX-ACB spans 736-828 (SRFPVVDRDL…LAENHGARLR (93 aa)).

It belongs to the phenylalanyl-tRNA synthetase beta subunit family. Type 1 subfamily. As to quaternary structure, tetramer of two alpha and two beta subunits. Requires Mg(2+) as cofactor.

The protein resides in the cytoplasm. The catalysed reaction is tRNA(Phe) + L-phenylalanine + ATP = L-phenylalanyl-tRNA(Phe) + AMP + diphosphate + H(+). The polypeptide is Phenylalanine--tRNA ligase beta subunit (Salinibacter ruber (strain DSM 13855 / M31)).